A 90-amino-acid chain; its full sequence is Small ribosomal subunit protein bS18 (90 aa).

This sequence belongs to the bacterial ribosomal protein bS18 family. In terms of assembly, part of the 30S ribosomal subunit. Forms a tight heterodimer with protein bS6.

In terms of biological role, binds as a heterodimer with protein bS6 to the central domain of the 16S rRNA, where it helps stabilize the platform of the 30S subunit. This chain is Small ribosomal subunit protein bS18, found in Bacteroides thetaiotaomicron (strain ATCC 29148 / DSM 2079 / JCM 5827 / CCUG 10774 / NCTC 10582 / VPI-5482 / E50).